Consider the following 1347-residue polypeptide: Spermatogenesis-associated protein 31A3 (1347 aa).

A helical transmembrane segment spans residues 23–43; it reads PWVLDIFLTLVFALGFFFLLL. 8 disordered regions span residues 55–87, 108–142, 154–235, 373–397, 627–658, 900–955, 1084–1161, and 1313–1335; these read PSPS…GREC, HLDK…HEPM, SPDP…STLI, EQDT…GPQK, QDES…EAQK, RGIP…REAV, VHEE…PSVS, and KAVS…SHHH. Residues 60–82 are compositionally biased toward basic residues; sequence GKRKCPVGRRRRPRGRMKNHSLR. Residues 165 to 178 are compositionally biased toward polar residues; sequence LASTPSPGPMTTSV. A compositionally biased stretch (pro residues) spans 198 to 211; the sequence is PEPPALFPHPPHTP. Polar residues-rich tracts occupy residues 627–651 and 927–948; these read QDES…STGE and LTYS…SSKA. 2 stretches are compositionally biased toward basic and acidic residues: residues 1108–1127 and 1137–1146; these read HKSE…RLEG and RKTEDTHQDE.

The protein belongs to the SPATA31 family.

It is found in the membrane. Functionally, may play a role in spermatogenesis. This chain is Spermatogenesis-associated protein 31A3 (SPATA31A3), found in Homo sapiens (Human).